Consider the following 239-residue polypeptide: Probable transcriptional regulatory protein RBAM_007230 (239 aa).

The protein belongs to the TACO1 family. YeeN subfamily.

The protein resides in the cytoplasm. The chain is Probable transcriptional regulatory protein RBAM_007230 from Bacillus velezensis (strain DSM 23117 / BGSC 10A6 / LMG 26770 / FZB42) (Bacillus amyloliquefaciens subsp. plantarum).